A 217-amino-acid chain; its full sequence is MKTLRFPAGLYGITPEWDDTDRLLAAVRAAAAGGMTALQLRRKLADERLRAAQARALAPLCRELGVVFLVNDHWKLALDVGADGAHLGRDDADPATVRAQAGAGLLLGVSCYNDLRRADALLAAGADYVAFGTVFASPTKPEAVHAPLQTLTEARARLLACPAPRPAVVAIGGITPANVSQVAQAGADSAAVISGLFEAPDIQAAARACAAAFSVNP.

Residues 39 to 43 (QLRRK) and N71 contribute to the 4-amino-2-methyl-5-(diphosphooxymethyl)pyrimidine site. Residues D72 and D91 each contribute to the Mg(2+) site. S110 serves as a coordination point for 4-amino-2-methyl-5-(diphosphooxymethyl)pyrimidine. 2-[(2R,5Z)-2-carboxy-4-methylthiazol-5(2H)-ylidene]ethyl phosphate is bound at residue 137–139 (SPT). K140 contributes to the 4-amino-2-methyl-5-(diphosphooxymethyl)pyrimidine binding site. Residues G173 and 193 to 194 (IS) contribute to the 2-[(2R,5Z)-2-carboxy-4-methylthiazol-5(2H)-ylidene]ethyl phosphate site.

This sequence belongs to the thiamine-phosphate synthase family. Requires Mg(2+) as cofactor.

The enzyme catalyses 2-[(2R,5Z)-2-carboxy-4-methylthiazol-5(2H)-ylidene]ethyl phosphate + 4-amino-2-methyl-5-(diphosphooxymethyl)pyrimidine + 2 H(+) = thiamine phosphate + CO2 + diphosphate. It carries out the reaction 2-(2-carboxy-4-methylthiazol-5-yl)ethyl phosphate + 4-amino-2-methyl-5-(diphosphooxymethyl)pyrimidine + 2 H(+) = thiamine phosphate + CO2 + diphosphate. It catalyses the reaction 4-methyl-5-(2-phosphooxyethyl)-thiazole + 4-amino-2-methyl-5-(diphosphooxymethyl)pyrimidine + H(+) = thiamine phosphate + diphosphate. The protein operates within cofactor biosynthesis; thiamine diphosphate biosynthesis; thiamine phosphate from 4-amino-2-methyl-5-diphosphomethylpyrimidine and 4-methyl-5-(2-phosphoethyl)-thiazole: step 1/1. In terms of biological role, condenses 4-methyl-5-(beta-hydroxyethyl)thiazole monophosphate (THZ-P) and 2-methyl-4-amino-5-hydroxymethyl pyrimidine pyrophosphate (HMP-PP) to form thiamine monophosphate (TMP). This Bordetella bronchiseptica (strain ATCC BAA-588 / NCTC 13252 / RB50) (Alcaligenes bronchisepticus) protein is Thiamine-phosphate synthase.